Consider the following 908-residue polypeptide: NADH-quinone oxidoreductase subunit G (908 aa).

Residues 2–83 form the 2Fe-2S ferredoxin-type domain; that stretch reads ATIHVDGKEY…GTFISIDDEE (82 aa). The [2Fe-2S] cluster site is built by cysteine 34, cysteine 45, cysteine 48, and cysteine 67. One can recognise a 4Fe-4S His(Cys)3-ligated-type domain in the interval 83-122; that stretch reads EAKQFRESVVEWLMTNHPHDCPVCEEGGNCHLQDMTVMTG. Residues histidine 99, cysteine 103, cysteine 106, cysteine 112, cysteine 151, cysteine 154, cysteine 157, cysteine 201, cysteine 228, cysteine 231, cysteine 235, and cysteine 263 each contribute to the [4Fe-4S] cluster site. The 4Fe-4S Mo/W bis-MGD-type domain occupies 221 to 277; the sequence is MQFAPSICQQCSIGCNISPGERYGELRRIENRYNGTVNHYFLCDRGRFGYGYVNLKD.

This sequence belongs to the complex I 75 kDa subunit family. As to quaternary structure, composed of 13 different subunits. Subunits NuoCD, E, F, and G constitute the peripheral sector of the complex. Requires [2Fe-2S] cluster as cofactor. The cofactor is [4Fe-4S] cluster.

The enzyme catalyses a quinone + NADH + 5 H(+)(in) = a quinol + NAD(+) + 4 H(+)(out). Functionally, NDH-1 shuttles electrons from NADH, via FMN and iron-sulfur (Fe-S) centers, to quinones in the respiratory chain. The immediate electron acceptor for the enzyme in this species is believed to be ubiquinone. Couples the redox reaction to proton translocation (for every two electrons transferred, four hydrogen ions are translocated across the cytoplasmic membrane), and thus conserves the redox energy in a proton gradient. The chain is NADH-quinone oxidoreductase subunit G (nuoG) from Escherichia coli O6:H1 (strain CFT073 / ATCC 700928 / UPEC).